A 500-amino-acid chain; its full sequence is Probable cytosol aminopeptidase (500 aa).

The Mn(2+) site is built by Lys264 and Asp269. The active site involves Lys276. Mn(2+) is bound by residues Asp287, Asp346, and Glu348. Arg350 is a catalytic residue.

Belongs to the peptidase M17 family. The cofactor is Mn(2+).

Its subcellular location is the cytoplasm. It catalyses the reaction Release of an N-terminal amino acid, Xaa-|-Yaa-, in which Xaa is preferably Leu, but may be other amino acids including Pro although not Arg or Lys, and Yaa may be Pro. Amino acid amides and methyl esters are also readily hydrolyzed, but rates on arylamides are exceedingly low.. The catalysed reaction is Release of an N-terminal amino acid, preferentially leucine, but not glutamic or aspartic acids.. In terms of biological role, presumably involved in the processing and regular turnover of intracellular proteins. Catalyzes the removal of unsubstituted N-terminal amino acids from various peptides. The polypeptide is Probable cytosol aminopeptidase (Rhodopseudomonas palustris (strain ATCC BAA-98 / CGA009)).